Consider the following 118-residue polypeptide: Small ribosomal subunit protein uS13 (118 aa).

The tract at residues 99-118 (GQRTRTNARTRKGPRKAIKK) is disordered.

It belongs to the universal ribosomal protein uS13 family. Part of the 30S ribosomal subunit. Forms a loose heterodimer with protein S19. Forms two bridges to the 50S subunit in the 70S ribosome.

Its function is as follows. Located at the top of the head of the 30S subunit, it contacts several helices of the 16S rRNA. In the 70S ribosome it contacts the 23S rRNA (bridge B1a) and protein L5 of the 50S subunit (bridge B1b), connecting the 2 subunits; these bridges are implicated in subunit movement. Contacts the tRNAs in the A and P-sites. The sequence is that of Small ribosomal subunit protein uS13 from Xylella fastidiosa (strain M12).